The primary structure comprises 705 residues: Dolichyl-diphosphooligosaccharide--protein glycosyltransferase subunit STT3A (705 aa).

Residues 1 to 17 (MTKLGFLRLSYEKQDTL) are Cytoplasmic-facing. The chain crosses the membrane as a helical span at residues 18–38 (LKLLILSMAAVLSFSTRLFAV). At 39–119 (LRFESVIHEF…IDIRNVCVFL (81 aa)) the chain is on the lumenal side. A DXD motif 1 motif is present at residues 47–49 (EFD). Aspartate 49 contacts Mn(2+). The helical transmembrane segment at 120–138 (APLFSSFTTIVTYHLTKEL) threads the bilayer. Topologically, residues 139–140 (KD) are cytoplasmic. Residues 141–158 (AGAGLLAAAMIAVVPGYI) traverse the membrane as a helical segment. At 159-169 (SRSVAGSYDNE) the chain is on the lumenal side. Mn(2+)-binding residues include aspartate 167 and glutamate 169. Residues 167–169 (DNE) carry the DXD motif 2 motif. Residues 170 to 189 (GIAIFCMLLTYYMWIKAVKT) traverse the membrane as a helical segment. At 190 to 191 (GS) the chain is on the cytoplasmic side. The helical transmembrane segment at 192 to 206 (IYWAAKCALAYFYMV) threads the bilayer. The Lumenal segment spans residues 207 to 211 (SSWGG). The helical transmembrane segment at 212–228 (YVFLINLIPLHVLVLML) threads the bilayer. Residues 229-233 (TGRFS) lie on the Cytoplasmic side of the membrane. The helical transmembrane segment at 234–259 (HRIYVAYCTVYCLGTILSMQISFVGF) threads the bilayer. At 260 to 267 (QPVLSSEH) the chain is on the lumenal side. A helical membrane pass occupies residues 268-287 (MAAFGVFGLCQIHAFVDYLR). The Cytoplasmic portion of the chain corresponds to 288-300 (SKLNPQQFEVLFR). Residues 301–321 (SVISLVGFVLLTIGALLMLTG) form a helical membrane-spanning segment. Topologically, residues 322 to 356 (KISPWTGRFYSLLDPSYAKNNIPIIASVSEHQPTT) are lumenal. Positions 348–351 (SVSE) match the SVSE motif motif. Residues 357–379 (WSSYYFDLQLLVFMFPVGLYYCF) form a helical membrane-spanning segment. Residues 380–385 (SNLSDA) are Cytoplasmic-facing. A helical membrane pass occupies residues 386-402 (RIFIIMYGVTSMYFSAV). Over 403–406 (MVRL) the chain is Lumenal. Position 405 (arginine 405) interacts with dolichyl diphosphooligosaccharide. The chain crosses the membrane as a helical span at residues 407–428 (MLVLAPVMCILSGIGVSQVLST). The Cytoplasmic portion of the chain corresponds to 429–453 (YMKNLDISRQDKKSKKQQDSTYPIK). Residues 454–473 (NEVASGMILVMAFFLITYTF) traverse the membrane as a helical segment. The Lumenal segment spans residues 474 to 705 (HSTWVTSEAY…DLDNRGLSRT (232 aa)). Residues 525 to 527 (WWD) are interacts with target acceptor peptide in protein substrate. Residues 525–529 (WWDYG) carry the WWDYG motif motif. Tyrosine 530 lines the dolichyl diphosphooligosaccharide pocket. N-linked (GlcNAc...) asparagine glycans are attached at residues asparagine 537 and asparagine 544. N-linked (GlcNAc...) (high mannose) asparagine glycosylation occurs at asparagine 548. The DK motif motif lies at 592–599 (DINKFLWM).

It belongs to the STT3 family. In terms of assembly, component of the oligosaccharyltransferase (OST) complex. There are 2 OST complexes, OST-A and OST-B, which contain STT3A or STT3B as catalytic subunit, respectively. OST-A and OST-B contain common core subunits RPN1, RPN2, OST48, OST4, DAD1 and TMEM258, and OST-A contains DC2/OSTC and KRTCAP2/KCP2 specific accessory subunits. OST-A complex assembly occurs through the formation of 3 subcomplexes. Subcomplex 1 contains RPN1 and TMEM258, subcomplex 2 contains the OST-A-specific subunits STT3A, DC2/OSTC, and KCP2 as well as the core subunit OST4, and subcomplex 3 contains RPN2, DAD1, and OST48. The OST-A complex can form stable complexes with the Sec61 complex or with both the Sec61 and TRAP complexes. The cofactor is Mg(2+). Mn(2+) serves as cofactor.

It is found in the endoplasmic reticulum membrane. It catalyses the reaction a di-trans,poly-cis-dolichyl diphosphooligosaccharide + L-asparaginyl-[protein] = N(4)-(oligosaccharide-(1-&gt;4)-N-acetyl-beta-D-glucosaminyl-(1-&gt;4)-N-acetyl-beta-D-glucosaminyl)-L-asparaginyl-[protein] + a di-trans,poly-cis-dolichyl diphosphate + H(+). It functions in the pathway protein modification; protein glycosylation. Catalytic subunit of the oligosaccharyl transferase (OST) complex that catalyzes the initial transfer of a defined glycan (Glc(3)Man(9)GlcNAc(2) in eukaryotes) from the lipid carrier dolichol-pyrophosphate to an asparagine residue within an Asn-X-Ser/Thr consensus motif in nascent polypeptide chains, the first step in protein N-glycosylation. N-glycosylation occurs cotranslationally and the complex associates with the Sec61 complex at the channel-forming translocon complex that mediates protein translocation across the endoplasmic reticulum (ER). All subunits are required for a maximal enzyme activity. This subunit contains the active site and the acceptor peptide and donor lipid-linked oligosaccharide (LLO) binding pockets. STT3A is present in the majority of OST complexes and mediates cotranslational N-glycosylation of most sites on target proteins, while STT3B-containing complexes are required for efficient post-translational glycosylation and mediate glycosylation of sites that have been skipped by STT3A. STT3A-containing OST-A complex is also required to prevent hyperglycosylation of some target proteins by preventing glycosylation of facultative sites before folding of target proteins is completed. The polypeptide is Dolichyl-diphosphooligosaccharide--protein glycosyltransferase subunit STT3A (Bos taurus (Bovine)).